We begin with the raw amino-acid sequence, 577 residues long: Aspartate--tRNA ligase (577 aa).

L-aspartate is bound at residue Glu169. Residues Gln193–Lys196 are aspartate. Arg215 contributes to the L-aspartate binding site. ATP is bound by residues Arg215 to Glu217 and Gln224. His440 lines the L-aspartate pocket. Glu474 lines the ATP pocket. Residue Arg481 coordinates L-aspartate. Gly526–Arg529 contributes to the ATP binding site.

This sequence belongs to the class-II aminoacyl-tRNA synthetase family. Type 1 subfamily. Homodimer.

The protein localises to the cytoplasm. The enzyme catalyses tRNA(Asp) + L-aspartate + ATP = L-aspartyl-tRNA(Asp) + AMP + diphosphate. Functionally, catalyzes the attachment of L-aspartate to tRNA(Asp) in a two-step reaction: L-aspartate is first activated by ATP to form Asp-AMP and then transferred to the acceptor end of tRNA(Asp). The polypeptide is Aspartate--tRNA ligase (Mesoplasma florum (strain ATCC 33453 / NBRC 100688 / NCTC 11704 / L1) (Acholeplasma florum)).